We begin with the raw amino-acid sequence, 123 residues long: ATP synthase epsilon chain (123 aa).

It belongs to the ATPase epsilon chain family. As to quaternary structure, F-type ATPases have 2 components, CF(1) - the catalytic core - and CF(0) - the membrane proton channel. CF(1) has five subunits: alpha(3), beta(3), gamma(1), delta(1), epsilon(1). CF(0) has three main subunits: a, b and c.

Its subcellular location is the cell inner membrane. In terms of biological role, produces ATP from ADP in the presence of a proton gradient across the membrane. The chain is ATP synthase epsilon chain from Helicobacter pylori (strain Shi470).